The sequence spans 412 residues: Poly-beta-1,6-N-acetyl-D-glucosamine synthase (412 aa).

Transmembrane regions (helical) follow at residues 7–28, 298–320, 332–354, and 364–386; these read LLFY…YFFI, IASI…TANI, IFFF…ALFI, and VGLI…VVIM.

Belongs to the glycosyltransferase 2 family.

The protein localises to the cell membrane. In terms of biological role, N-acetylglucosaminyltransferase that catalyzes the polymerization of single monomer units of UDP-N-acetylglucosamine to produce the linear homomer poly-beta-1,6-N-acetyl-D-glucosamine (PNAG, also referred to as PIA), a biofilm adhesin polysaccharide. Requires IcaD for full activity. This is Poly-beta-1,6-N-acetyl-D-glucosamine synthase (icaA) from Staphylococcus epidermidis.